Here is a 488-residue protein sequence, read N- to C-terminus: Gamma-aminobutyric acid receptor subunit beta-4 (488 aa).

The first 25 residues, 1–25 (MWTFQADRLSGIVSALAALCVACCA), serve as a signal peptide directing secretion. The Extracellular portion of the chain corresponds to 26–244 (QSPSTGNISV…SFRIKRNIGY (219 aa)). N-linked (GlcNAc...) asparagine glycans are attached at residues Asn-32, Asn-104, Asn-173, and Asn-195. A disulfide bond links Cys-160 and Cys-174. The next 3 helical transmembrane spans lie at 245–266 (FILQ…SFWI), 271–292 (SAAR…NTHL), and 304–326 (AIDV…YAFV). Residues 327–465 (NYIFFGRGPR…DLTDVSTIDK (139 aa)) lie on the Cytoplasmic side of the membrane. The helical transmembrane segment at 466–487 (WSRIIFPITFGFFNLVYWLYYV) threads the bilayer.

The protein belongs to the ligand-gated ion channel (TC 1.A.9) family. Gamma-aminobutyric acid receptor (TC 1.A.9.5) subfamily. GABRB4 sub-subfamily. In terms of assembly, generally pentameric. There are five types of GABA(A) receptor chains: alpha, beta, gamma, delta, and rho.

Its subcellular location is the postsynaptic cell membrane. It is found in the cell membrane. Functionally, GABA, the major inhibitory neurotransmitter in the vertebrate brain, mediates neuronal inhibition by binding to the GABA/benzodiazepine receptor and opening an integral chloride channel. The protein is Gamma-aminobutyric acid receptor subunit beta-4 (GABRB4) of Gallus gallus (Chicken).